Here is a 319-residue protein sequence, read N- to C-terminus: Adenosine receptor A3 (319 aa).

At 1-15 (MEADNTTETDWLNIT) the chain is on the extracellular side. N-linked (GlcNAc...) asparagine glycosylation is found at Asn-5 and Asn-13. A helical membrane pass occupies residues 16–38 (YITMEAAIGLCAVVGNMLVIWVV). At 39-49 (KLNPTLRTTTV) the chain is on the cytoplasmic side. The chain crosses the membrane as a helical span at residues 50-73 (YFIVSLALADIAVGVLVIPLAIAV). Over 74 to 85 (SLQVKMHFYACL) the chain is Extracellular. Cys-84 and Cys-167 form a disulfide bridge. A helical transmembrane segment spans residues 86–107 (FMSCVLLIFTHASIMSLLAIAV). Topologically, residues 108–127 (HRYLRVKLTVRYRTVTTQRR) are cytoplasmic. A helical transmembrane segment spans residues 128-149 (IWLFLGLCWLVSFLVGLTPMFG). Residues 150 to 178 (WNRKATLASSQNSSTLLCHFRSVVSLDYM) lie on the Extracellular side of the membrane. An N-linked (GlcNAc...) asparagine glycan is attached at Asn-161. The helical transmembrane segment at 179–199 (VFFSFITWILVPLVVMCIIYL) threads the bilayer. Residues 200–232 (DIFYIIRNKLSQNLTGFRETRAFYGREFKTAKS) are Cytoplasmic-facing. A helical membrane pass occupies residues 233–256 (LFLVLFLFALCWLPLSIINFVSYF). At 257-262 (DVKIPD) the chain is on the extracellular side. A helical membrane pass occupies residues 263–285 (VAMCLGILLSHANSMMNPIVYAC). At 286-319 (KIKKFKETYFLILRAVRLCQTSDSLDSNMEQTTE) the chain is on the cytoplasmic side. Cys-304 carries the S-palmitoyl cysteine lipid modification.

It belongs to the G-protein coupled receptor 1 family. Post-translationally, phosphorylation on Thr-317 and Thr-318 may be crucial for rapid desensitization. Phosphorylation on Thr-317 may be necessary for phosphorylation on Thr-318 to occur.

It localises to the cell membrane. Receptor for adenosine. The activity of this receptor is mediated by G proteins which inhibits adenylyl cyclase. In Mus musculus (Mouse), this protein is Adenosine receptor A3 (Adora3).